Consider the following 122-residue polypeptide: Large ribosomal subunit protein bL12 (122 aa).

This sequence belongs to the bacterial ribosomal protein bL12 family. As to quaternary structure, homodimer. Part of the 50S ribosomal subunit; present in 4 copies per ribosome. Forms part of the ribosomal stalk which helps the ribosome interact with GTP-bound translation factors. Forms a pentameric L10(L12)2(L12)2 complex, where L10 forms an elongated spine to which 2 L12 dimers bind in a sequential fashion.

Its function is as follows. Forms part of the ribosomal stalk which helps the ribosome interact with GTP-bound translation factors. Is thus essential for accurate translation. This Geobacillus stearothermophilus (Bacillus stearothermophilus) protein is Large ribosomal subunit protein bL12.